We begin with the raw amino-acid sequence, 423 residues long: Osteomodulin (423 aa).

An N-terminal signal peptide occupies residues 1 to 20; that stretch reads MGCLRPIYVLFFCFVVRVYG. 6 positions are modified to sulfotyrosine: Y22, Y25, Y31, Y39, Y51, and Y77. The 39-residue stretch at 53–91 folds into the LRRNT domain; sequence APFYQNILGCAKECFCPTNFPTSMYCDNRKLKTIPDIPM. LRR repeat units follow at residues 92–113, 116–129, 142–164, 165–184, 187–207, 213–233, 234–255, 258–279, 281–294, 301–322, and 331–353; these read HIQQ…SFIN, HLKE…KIKS, NLQQ…PKSL, ERLL…AMDG, NVTM…KGKI, KLMQ…GLPL, SLMY…YFQK, KLHA…IFNL, NLIE…KLKQ, NLEH…MMCP, and HLTY…IFFC. N-linked (GlcNAc...) asparagine glycosylation is found at N113 and N121. N-linked (GlcNAc...) asparagine glycosylation occurs at N187. Residues N242 and N278 are each glycosylated (N-linked (GlcNAc...) asparagine). The N-linked (GlcNAc...) asparagine glycan is linked to N316. The cysteines at positions 321 and 353 are disulfide-linked. The disordered stretch occupies residues 383–408; it reads YQDEEEEEEDDSQDHTLEGQEETEEH. Residues 385 to 394 show a composition bias toward acidic residues; that stretch reads DEEEEEEDDS. Residues Y413 and Y414 each carry the sulfotyrosine modification.

The protein belongs to the small leucine-rich proteoglycan (SLRP) family. SLRP class II subfamily. Binds the alpha(V)beta(3)-integrin. In terms of processing, glycosylated; contains keratan sulfate. Osteoblast and odontoblast. Expressed in femoral bone and calvaria tissues. Detected in femoral head, rib, tendon and bone marrow.

It is found in the secreted. The protein localises to the extracellular space. It localises to the extracellular matrix. In terms of biological role, may be implicated in biomineralization processes. Has a function in binding of osteoblasts via the alpha(V)beta(3)-integrin. In Rattus norvegicus (Rat), this protein is Osteomodulin (Omd).